The following is a 290-amino-acid chain: Appressorium protein ROW2 (290 aa).

Positions 1–19 (MFTKSVFIALVAGVLGVTA) are cleaved as a signal peptide. The interval 266 to 290 (AIKTPSKRSVMATHVKRSPEWEEEP) is disordered.

The protein localises to the secreted. It is found in the nucleus. Its function is as follows. Plays a role in the formation of the appressorium, a specialized infection structure with the purpose of penetrating the host surface, and is required for proper remodeling of the appressorium wall and vesicle secretion. This is Appressorium protein ROW2 from Mycosarcoma maydis (Corn smut fungus).